Reading from the N-terminus, the 2671-residue chain is Stalled ribosome sensor GCN1 (2671 aa).

The residue at position 2 (Ala-2) is an N-acetylalanine. HEAT repeat units lie at residues 140–178 (NKLV…ENPG), 257–293 (EFKD…LDLS), 294–331 (QYAL…QCSD), 385–423 (CVAE…EVPK), 425–459 (LTDW…GDTL), 460–500 (LQAL…SKLS), 560–597 (SKVQ…SLGG), 599–636 (KLAN…MGKT), 700–732 (AFIT…SLSV), and 733–772 (LSPD…PAGE). Ser-729 bears the Phosphoserine mark. The residue at position 786 (Ser-786) is a Phosphoserine. The stretch at 804-865 (QIIEMELKEE…EAALGLLDAI (62 aa)) forms a coiled coil. 37 HEAT repeats span residues 879-918 (VLVD…TLGT), 979-1016 (SLVF…HAQL), 1035-1072 (LPRV…SSSG), 1078-1115 (FAEQ…VLPS), 1155-1192 (DLQS…RYQR), 1210-1250 (YRPP…YLDS), 1251-1289 (SQVK…AHGK), 1290-1332 (ENVN…HLDK), 1335-1372 (PKVK…AVKE), 1374-1410 (AGGM…GLGI), 1413-1451 (LKQQ…MLGK), 1455-1492 (PYVV…NLSA), 1493-1530 (HGVK…CAPK), 1534-1571 (SCLP…VIRN), 1573-1609 (EILA…HFID), 1611-1648 (PSLA…LTDQ), 1653-1690 (PYLP…GMGE), 1692-1729 (CFED…GLGV), 1731-1769 (KLEK…TFGD), 1773-1810 (PYVG…MYAE), 1812-1848 (AIAL…HISG), 1921-1958 (EILP…KLGE), 1959-1996 (KILP…STSR), 2001-2038 (FFSE…TIGH), 2039-2074 (QALE…VKSR), 2076-2108 (VLPY…LTRH), 2111-2146 (VILP…VEDD), 2147-2184 (TGHR…RSKA), 2188-2225 (SHLR…KLDA), 2259-2296 (RGVT…LTSA), 2301-2338 (PSVV…GKVG), 2339-2380 (IALK…IHVK), 2382-2417 (DPLF…GAGS), 2422-2459 (AIRK…FLTD), 2546-2583 (QLPP…EPRP), 2588-2625 (QTIK…MRRG), and 2627-2661 (ELLQ…QADS). Residues 2260 to 2408 (GVTSILPVLR…GIRDTMLQAL (149 aa)) form an RWDBD region region. Ser-2276 is modified (phosphoserine).

The protein belongs to the GCN1 family. In terms of assembly, interacts with EIF2AK4/GCN2; this interaction stimulates the EIF2AK4/GCN2 kinase activity and is impaired by IMPACT upon a variety of stress conditions, such as amino acid depletion, UV-C irradiation, proteasome inhibitor treatment and glucose deprivation. Interacts with IMPACT; this prevents the interaction of GCN1 with EIF2AK4/GCN2 and inhibits EIF2AK4/GCN2 kinase activity. Interacts with RNF14; interaction takes place following ribosome stalling and promotes recruitment of RNF14. In terms of tissue distribution, expressed in the hypothalamus, cortex and hippocampus.

It is found in the cytoplasm. Functionally, ribosome collision sensor that plays a key role in the RNF14-RNF25 translation quality control pathway, a pathway that takes place when a ribosome has stalled during translation, and which promotes ubiquitination and degradation of translation factors on stalled ribosomes. Directly binds to the ribosome and acts as a sentinel for colliding ribosomes: activated following ribosome stalling and promotes recruitment of RNF14, which directly ubiquitinates EEF1A1/eEF1A, leading to its degradation. In addition to EEF1A1/eEF1A, the RNF14-RNF25 translation quality control pathway mediates degradation of ETF1/eRF1 and ubiquitination of ribosomal protein. GCN1 also acts as a positive activator of the integrated stress response (ISR) by mediating activation of EIF2AK4/GCN2 in response to amino acid starvation. Interaction with EIF2AK4/GCN2 on translating ribosomes stimulates EIF2AK4/GCN2 kinase activity, leading to phosphorylation of eukaryotic translation initiation factor 2 (eIF-2-alpha/EIF2S1). EIF2S1/eIF-2-alpha phosphorylation converts EIF2S1/eIF-2-alpha into a global protein synthesis inhibitor, leading to a global attenuation of cap-dependent translation, and thus to a reduced overall utilization of amino acids, while concomitantly initiating the preferential translation of ISR-specific mRNAs, such as the transcriptional activator ATF4, and hence allowing ATF4-mediated reprogramming of amino acid biosynthetic gene expression to alleviate nutrient depletion. The polypeptide is Stalled ribosome sensor GCN1 (Mus musculus (Mouse)).